We begin with the raw amino-acid sequence, 134 residues long: Rubredoxin-2 (134 aa).

Residues 1–53 (MAKYQCPDCQYIYDECKGEPHEGFQPNTNWGEIPEEWACPDCAVRDKIDFKML) form the Rubredoxin-like domain. The Fe cation site is built by Cys6, Cys9, Cys39, and Cys42. A compositionally biased stretch (basic and acidic residues) spans 99 to 116 (SITDERENTPDNKVERRS). Residues 99–134 (SITDERENTPDNKVERRSQSQAVRRSSVKKIKNNKR) form a disordered region. The span at 124 to 134 (SSVKKIKNNKR) shows a compositional bias: basic residues.

Belongs to the rubredoxin family. The cofactor is Fe(3+).

Its subcellular location is the cytoplasm. It functions in the pathway hydrocarbon metabolism; alkane degradation. Functionally, involved in the hydrocarbon hydroxylating system, which transfers electrons from NADH to rubredoxin reductase and then through rubredoxin to alkane 1 monooxygenase. The protein is Rubredoxin-2 (alkF) of Pseudomonas putida (Arthrobacter siderocapsulatus).